The following is a 320-amino-acid chain: Ferrochelatase (320 aa).

His-194 and Glu-275 together coordinate Fe cation.

It belongs to the ferrochelatase family.

The protein localises to the cytoplasm. It carries out the reaction heme b + 2 H(+) = protoporphyrin IX + Fe(2+). The protein operates within porphyrin-containing compound metabolism; protoheme biosynthesis; protoheme from protoporphyrin-IX: step 1/1. Functionally, catalyzes the ferrous insertion into protoporphyrin IX. In Vibrio atlanticus (strain LGP32) (Vibrio splendidus (strain Mel32)), this protein is Ferrochelatase.